The following is a 226-amino-acid chain: ATP-dependent dethiobiotin synthetase BioD (226 aa).

Threonine 19 serves as a coordination point for Mg(2+). Lysine 40 is a catalytic residue. Aspartate 53 and glutamate 114 together coordinate Mg(2+). ATP-binding positions include aspartate 53, 114 to 117 (EGAG), and 174 to 175 (NR).

This sequence belongs to the dethiobiotin synthetase family. Homodimer. Mg(2+) serves as cofactor.

It localises to the cytoplasm. It carries out the reaction (7R,8S)-7,8-diammoniononanoate + CO2 + ATP = (4R,5S)-dethiobiotin + ADP + phosphate + 3 H(+). It functions in the pathway cofactor biosynthesis; biotin biosynthesis; biotin from 7,8-diaminononanoate: step 1/2. Functionally, catalyzes a mechanistically unusual reaction, the ATP-dependent insertion of CO2 between the N7 and N8 nitrogen atoms of 7,8-diaminopelargonic acid (DAPA, also called 7,8-diammoniononanoate) to form a ureido ring. This is ATP-dependent dethiobiotin synthetase BioD from Nitrosospira multiformis (strain ATCC 25196 / NCIMB 11849 / C 71).